A 273-amino-acid polypeptide reads, in one-letter code: Glutamate 5-kinase (273 aa).

Lysine 15 serves as a coordination point for ATP. Residues serine 55, aspartate 142, and asparagine 158 each contribute to the substrate site. Residues 178–179 and 220–226 each bind ATP; these read SD and TGGMLSK.

It belongs to the glutamate 5-kinase family.

Its subcellular location is the cytoplasm. The catalysed reaction is L-glutamate + ATP = L-glutamyl 5-phosphate + ADP. It participates in amino-acid biosynthesis; L-proline biosynthesis; L-glutamate 5-semialdehyde from L-glutamate: step 1/2. Catalyzes the transfer of a phosphate group to glutamate to form L-glutamate 5-phosphate. The polypeptide is Glutamate 5-kinase (Streptococcus pyogenes serotype M49 (strain NZ131)).